Here is a 558-residue protein sequence, read N- to C-terminus: Glucose-6-phosphate isomerase (558 aa).

The active-site Proton donor is the Glu362. Residues His393 and Lys523 contribute to the active site.

This sequence belongs to the GPI family.

Its subcellular location is the cytoplasm. The enzyme catalyses alpha-D-glucose 6-phosphate = beta-D-fructose 6-phosphate. It participates in carbohydrate degradation; glycolysis; D-glyceraldehyde 3-phosphate and glycerone phosphate from D-glucose: step 2/4. The protein is Glucose-6-phosphate isomerase (Pgi) of Drosophila yakuba (Fruit fly).